The following is a 184-amino-acid chain: Putative lyase MJ0807 (184 aa).

Belongs to the chorismate pyruvate-lyase type 2 family.

This is Putative lyase MJ0807 from Methanocaldococcus jannaschii (strain ATCC 43067 / DSM 2661 / JAL-1 / JCM 10045 / NBRC 100440) (Methanococcus jannaschii).